The following is a 219-amino-acid chain: NADH-quinone oxidoreductase subunit C (219 aa).

This sequence belongs to the complex I 30 kDa subunit family. In terms of assembly, NDH-1 is composed of 14 different subunits. Subunits NuoB, C, D, E, F, and G constitute the peripheral sector of the complex.

The protein localises to the cell inner membrane. It catalyses the reaction a quinone + NADH + 5 H(+)(in) = a quinol + NAD(+) + 4 H(+)(out). NDH-1 shuttles electrons from NADH, via FMN and iron-sulfur (Fe-S) centers, to quinones in the respiratory chain. The immediate electron acceptor for the enzyme in this species is believed to be ubiquinone. Couples the redox reaction to proton translocation (for every two electrons transferred, four hydrogen ions are translocated across the cytoplasmic membrane), and thus conserves the redox energy in a proton gradient. The sequence is that of NADH-quinone oxidoreductase subunit C from Methylorubrum extorquens (strain PA1) (Methylobacterium extorquens).